The chain runs to 232 residues: MNDLVISCENLNKVYQDGSNQVAVLKGVDLALQQGEMLAIVGSSGSGKSTLLHILGTLDTATSGSAKIKNQEVAKLSRTEQAAFRNKNLGFIYQFHHLLMEFSAVENVAMPLLIKGLSAKAAKVAALEMLEKVGLAHRSSHKPSALSGGERQRVAIARALVTKPALVLADEPTGNLDKQNAIKIYDLINELNKSLNTSFVVVTHDLELADKLGKIAYLDDGKLTIKESQHVA.

In terms of domain architecture, ABC transporter spans 6-231; the sequence is ISCENLNKVY…KLTIKESQHV (226 aa). 42–49 is a binding site for ATP; sequence GSSGSGKS.

It belongs to the ABC transporter superfamily. Lipoprotein translocase (TC 3.A.1.125) family. As to quaternary structure, the complex is composed of two ATP-binding proteins (LolD) and two transmembrane proteins (LolC and LolE).

The protein localises to the cell inner membrane. In terms of biological role, part of the ABC transporter complex LolCDE involved in the translocation of mature outer membrane-directed lipoproteins, from the inner membrane to the periplasmic chaperone, LolA. Responsible for the formation of the LolA-lipoprotein complex in an ATP-dependent manner. This is Lipoprotein-releasing system ATP-binding protein LolD from Pseudoalteromonas translucida (strain TAC 125).